A 278-amino-acid chain; its full sequence is NAD-capped RNA hydrolase NudC (278 aa).

Residue arginine 84 participates in substrate binding. Positions 114 and 117 each coordinate Zn(2+). Glutamate 127 contributes to the substrate binding site. Residues cysteine 132 and cysteine 135 each coordinate Zn(2+). Tyrosine 140 is a substrate binding site. Residues 141-265 (PRLSPSMIVL…IARHLIDLYL (125 aa)) form the Nudix hydrolase domain. Residues alanine 174, glutamate 190, and glutamate 194 each coordinate a divalent metal cation. The Nudix box signature appears at 175-196 (GFVEAGESVEQCVVREVREEVG). Residue 208 to 215 (QNWPFPHS) coordinates substrate. Residue glutamate 235 participates in a divalent metal cation binding. Alanine 257 contributes to the substrate binding site.

The protein belongs to the Nudix hydrolase family. NudC subfamily. In terms of assembly, homodimer. It depends on Mg(2+) as a cofactor. The cofactor is Mn(2+). Zn(2+) is required as a cofactor.

It carries out the reaction a 5'-end NAD(+)-phospho-ribonucleoside in mRNA + H2O = a 5'-end phospho-adenosine-phospho-ribonucleoside in mRNA + beta-nicotinamide D-ribonucleotide + 2 H(+). The catalysed reaction is NAD(+) + H2O = beta-nicotinamide D-ribonucleotide + AMP + 2 H(+). It catalyses the reaction NADH + H2O = reduced beta-nicotinamide D-ribonucleotide + AMP + 2 H(+). MRNA decapping enzyme that specifically removes the nicotinamide adenine dinucleotide (NAD) cap from a subset of mRNAs by hydrolyzing the diphosphate linkage to produce nicotinamide mononucleotide (NMN) and 5' monophosphate mRNA. The NAD-cap is present at the 5'-end of some mRNAs and stabilizes RNA against 5'-processing. Has preference for mRNAs with a 5'-end purine. Catalyzes the hydrolysis of a broad range of dinucleotide pyrophosphates. The protein is NAD-capped RNA hydrolase NudC of Pseudomonas aeruginosa (strain ATCC 15692 / DSM 22644 / CIP 104116 / JCM 14847 / LMG 12228 / 1C / PRS 101 / PAO1).